The sequence spans 154 residues: Deoxyuridine 5'-triphosphate nucleotidohydrolase (154 aa).

Substrate is bound by residues 74–76 (RSG), Asn-87, 91–93 (TID), and Lys-101.

This sequence belongs to the dUTPase family. Mg(2+) is required as a cofactor.

It carries out the reaction dUTP + H2O = dUMP + diphosphate + H(+). It functions in the pathway pyrimidine metabolism; dUMP biosynthesis; dUMP from dCTP (dUTP route): step 2/2. This enzyme is involved in nucleotide metabolism: it produces dUMP, the immediate precursor of thymidine nucleotides and it decreases the intracellular concentration of dUTP so that uracil cannot be incorporated into DNA. This Cytophaga hutchinsonii (strain ATCC 33406 / DSM 1761 / CIP 103989 / NBRC 15051 / NCIMB 9469 / D465) protein is Deoxyuridine 5'-triphosphate nucleotidohydrolase.